The following is a 420-amino-acid chain: Gamma-glutamyl phosphate reductase (420 aa).

The protein belongs to the gamma-glutamyl phosphate reductase family.

It is found in the cytoplasm. It carries out the reaction L-glutamate 5-semialdehyde + phosphate + NADP(+) = L-glutamyl 5-phosphate + NADPH + H(+). Its pathway is amino-acid biosynthesis; L-proline biosynthesis; L-glutamate 5-semialdehyde from L-glutamate: step 2/2. Functionally, catalyzes the NADPH-dependent reduction of L-glutamate 5-phosphate into L-glutamate 5-semialdehyde and phosphate. The product spontaneously undergoes cyclization to form 1-pyrroline-5-carboxylate. This Streptococcus pneumoniae (strain 70585) protein is Gamma-glutamyl phosphate reductase.